Consider the following 95-residue polypeptide: Large ribosomal subunit protein eL42 (95 aa).

Cysteine 11, cysteine 14, cysteine 71, and cysteine 74 together coordinate Zn(2+). The segment at 11–74 (CPRCNTHTEH…QVLVITCTVC (64 aa)) adopts a C4-type zinc-finger fold.

The protein belongs to the eukaryotic ribosomal protein eL42 family. As to quaternary structure, part of the 50S ribosomal subunit. The cofactor is Zn(2+).

Functionally, binds to the 23S rRNA. The chain is Large ribosomal subunit protein eL42 from Aeropyrum pernix (strain ATCC 700893 / DSM 11879 / JCM 9820 / NBRC 100138 / K1).